The sequence spans 517 residues: Probable bifunctional methylthioribulose-1-phosphate dehydratase/enolase-phosphatase E1 (517 aa).

Residues 1 to 242 (MACSGCSCEA…CIKLYQLGID (242 aa)) form a methylthioribulose-1-phosphate dehydratase region. Cys114 lines the substrate pocket. The Zn(2+) site is built by His132 and His134. Glu157 (proton donor/acceptor; for methylthioribulose-1-phosphate dehydratase activity) is an active-site residue. His207 serves as a coordination point for Zn(2+). The tract at residues 278–517 (VVLDIEGTTT…FRTIKSFSEI (240 aa)) is enolase-phosphatase E1. Positions 281 and 283 each coordinate Mg(2+). Substrate-binding positions include 416–417 (SS) and Lys450. Asp476 lines the Mg(2+) pocket.

This sequence in the N-terminal section; belongs to the aldolase class II family. MtnB subfamily. It in the C-terminal section; belongs to the HAD-like hydrolase superfamily. MasA/MtnC family. Zn(2+) serves as cofactor. Requires Mg(2+) as cofactor.

The catalysed reaction is 5-(methylsulfanyl)-D-ribulose 1-phosphate = 5-methylsulfanyl-2,3-dioxopentyl phosphate + H2O. The enzyme catalyses 5-methylsulfanyl-2,3-dioxopentyl phosphate + H2O = 1,2-dihydroxy-5-(methylsulfanyl)pent-1-en-3-one + phosphate. It functions in the pathway amino-acid biosynthesis; L-methionine biosynthesis via salvage pathway; L-methionine from S-methyl-5-thio-alpha-D-ribose 1-phosphate: step 2/6. The protein operates within amino-acid biosynthesis; L-methionine biosynthesis via salvage pathway; L-methionine from S-methyl-5-thio-alpha-D-ribose 1-phosphate: step 3/6. It participates in amino-acid biosynthesis; L-methionine biosynthesis via salvage pathway; L-methionine from S-methyl-5-thio-alpha-D-ribose 1-phosphate: step 4/6. In Zea mays (Maize), this protein is Probable bifunctional methylthioribulose-1-phosphate dehydratase/enolase-phosphatase E1.